The sequence spans 349 residues: Protein RecA (349 aa).

An ATP-binding site is contributed by 65 to 72 (GPESSGKT).

This sequence belongs to the RecA family.

Its subcellular location is the cytoplasm. Its function is as follows. Can catalyze the hydrolysis of ATP in the presence of single-stranded DNA, the ATP-dependent uptake of single-stranded DNA by duplex DNA, and the ATP-dependent hybridization of homologous single-stranded DNAs. It interacts with LexA causing its activation and leading to its autocatalytic cleavage. The sequence is that of Protein RecA from Vibrio vulnificus (strain CMCP6).